A 488-amino-acid polypeptide reads, in one-letter code: Cobyric acid synthase (488 aa).

The GATase cobBQ-type domain maps to 254 to 442 (KFKIVVPVLP…VHGLFGMDTQ (189 aa)). The active-site Nucleophile is Cys-336. His-434 is a catalytic residue.

The protein belongs to the CobB/CobQ family. CobQ subfamily.

The protein operates within cofactor biosynthesis; adenosylcobalamin biosynthesis. Its function is as follows. Catalyzes amidations at positions B, D, E, and G on adenosylcobyrinic A,C-diamide. NH(2) groups are provided by glutamine, and one molecule of ATP is hydrogenolyzed for each amidation. The sequence is that of Cobyric acid synthase from Beijerinckia indica subsp. indica (strain ATCC 9039 / DSM 1715 / NCIMB 8712).